Here is a 106-residue protein sequence, read N- to C-terminus: MVNVPKTRKTYCKGKACRKHSQHKVTQYKAGKASLYAQGKRRYDRKQSGFGGQTKQIFHKKAKTTKKVVLRLECMSCKTKTQLALKRCKHFELGGEKKQKGQALQF.

This sequence belongs to the eukaryotic ribosomal protein eL42 family.

The chain is Large ribosomal subunit protein eL42 (RPL44) from Kluyveromyces marxianus (Yeast).